A 361-amino-acid chain; its full sequence is Probable mannose-1-phosphate guanylyltransferase 2 (361 aa).

GDP-alpha-D-mannose is bound by residues leucine 6 and valine 7. Diphosphate is bound by residues glycine 9, glycine 11, threonine 12, arginine 13, and lysine 23. Residues glycine 85, asparagine 109, aspartate 111, glycine 146, and asparagine 173 each coordinate GDP-alpha-D-mannose.

The protein belongs to the transferase hexapeptide repeat family.

It carries out the reaction alpha-D-mannose 1-phosphate + GTP + H(+) = GDP-alpha-D-mannose + diphosphate. Its pathway is nucleotide-sugar biosynthesis; GDP-alpha-D-mannose biosynthesis; GDP-alpha-D-mannose from alpha-D-mannose 1-phosphate (GTP route): step 1/1. Catalyzes a reaction of the Smirnoff-Wheeler pathway, the major route to ascorbate biosynthesis in plants. In Oryza sativa subsp. japonica (Rice), this protein is Probable mannose-1-phosphate guanylyltransferase 2.